A 62-amino-acid polypeptide reads, in one-letter code: Temporin-CDYb (62 aa).

Residues 1–22 (MFTLKKSLLLLFFLGTINLSLC) form the signal peptide. Positions 23-45 (EEERDADEEERRDDPEERAVQVE) are excised as a propeptide. Leucine amide is present on Leu-60.

The protein belongs to the frog skin active peptide (FSAP) family. Temporin subfamily. As to expression, expressed by the skin glands.

Its subcellular location is the secreted. Its function is as follows. Antimicrobial peptide. Has low activity against the Gram-positive bacterium S.aureus (MIC&gt;100 uM) and the Gram-negative bacterium E.coli (MIC&gt;100 uM). Has weak hemolytic activity against human erythrocytes. This Rana dybowskii (Dybovsky's frog) protein is Temporin-CDYb.